The chain runs to 120 residues: Large ribosomal subunit protein uL18 (120 aa).

Belongs to the universal ribosomal protein uL18 family. Part of the 50S ribosomal subunit; part of the 5S rRNA/L5/L18/L25 subcomplex. Contacts the 5S and 23S rRNAs.

Functionally, this is one of the proteins that bind and probably mediate the attachment of the 5S RNA into the large ribosomal subunit, where it forms part of the central protuberance. The chain is Large ribosomal subunit protein uL18 from Brucella anthropi (strain ATCC 49188 / DSM 6882 / CCUG 24695 / JCM 21032 / LMG 3331 / NBRC 15819 / NCTC 12168 / Alc 37) (Ochrobactrum anthropi).